A 284-amino-acid polypeptide reads, in one-letter code: Avenin-like b3 (284 aa).

A signal peptide spans 1 to 18; that stretch reads MKVFILALLALTATTAIA.

This sequence belongs to the prolamin family. In terms of processing, contains disulfide bonds.

In terms of biological role, seed storage protein. Might be integrated via inter-chain disulfide bonds within the glutenin polymer. In Triticum aestivum (Wheat), this protein is Avenin-like b3.